Consider the following 300-residue polypeptide: Ribosomal protein L11 methyltransferase (300 aa).

Residues Thr-152, Gly-173, Asp-195, and Asn-234 each coordinate S-adenosyl-L-methionine.

This sequence belongs to the methyltransferase superfamily. PrmA family.

It localises to the cytoplasm. It carries out the reaction L-lysyl-[protein] + 3 S-adenosyl-L-methionine = N(6),N(6),N(6)-trimethyl-L-lysyl-[protein] + 3 S-adenosyl-L-homocysteine + 3 H(+). In terms of biological role, methylates ribosomal protein L11. This Burkholderia lata (strain ATCC 17760 / DSM 23089 / LMG 22485 / NCIMB 9086 / R18194 / 383) protein is Ribosomal protein L11 methyltransferase.